Here is a 340-residue protein sequence, read N- to C-terminus: Protein B17 (340 aa).

This sequence belongs to the orthopoxvirus B17 protein family.

The sequence is that of Protein B17 from Vaccinia virus (strain Western Reserve) (VACV).